We begin with the raw amino-acid sequence, 274 residues long: Oxidoreductase BOA17 (274 aa).

Positions 14, 32, 57, 84, and 117 each coordinate NADP(+). Active-site proton donor residues include S135 and Y149. Y149, K153, I182, and T184 together coordinate NADP(+). K153 serves as the catalytic Lowers pKa of active site Tyr.

The protein belongs to the short-chain dehydrogenases/reductases (SDR) family.

It participates in polyketide biosynthesis. Its function is as follows. Oxidoreductase; part of the gene cluster B that mediates the biosynthesis of botcinic acid and its botcinin derivatives, acetate-derived polyketides that contribute to virulence when combined with the sesquiterpene botrydial. Botcinic acid and its derivatives have been shown to induce chlorosis and necrosis during host plant infection, but also have antifungal activities. Two polyketide synthases, BOA6 and BOA9, are involved in the biosynthesis of botcinins. BOA6 mediates the formation of the per-methylated tetraketide core by condensation of four units of malonyl-CoA with one unit of acetyl-CoA, which would be methylated in activated methylene groups to yield a bicyclic acid intermediate that could then either be converted to botrylactone derivatives or lose the starter acetate unit through a retro-Claisen type C-C bond cleavage to yield botcinin derivatives. The second polyketide synthase, BOA9, is probably required for the biosynthesis of the tetraketide side chain of botcinins. The methyltransferase (MT) domain within BOA6 is probably responsible for the incorporation of four methyl groups. The trans-enoyl reductase BOA5 might take over the enoyl reductase function of BOA6 that misses an ER domain. The monooxygenases BOA2, BOA3 and BOA4 might be involved in further hydroxylations at C4, C5 and C8, whereas BOA7, close to BOA9, could potentially be involved in the hydroxylation at C4 in the side chain of botcinins. The sequence is that of Oxidoreductase BOA17 from Botryotinia fuckeliana (strain B05.10) (Noble rot fungus).